The chain runs to 504 residues: Maturase K (504 aa).

This sequence belongs to the intron maturase 2 family. MatK subfamily.

The protein resides in the plastid. It is found in the chloroplast. Functionally, usually encoded in the trnK tRNA gene intron. Probably assists in splicing its own and other chloroplast group II introns. This chain is Maturase K, found in Capsella bursa-pastoris (Shepherd's purse).